The primary structure comprises 341 residues: Dihydroorotate dehydrogenase (quinone) (341 aa).

FMN-binding positions include 61-65 (AGLDK) and threonine 85. Residue lysine 65 participates in substrate binding. 110–114 (NRMGF) is a substrate binding site. Residues asparagine 138 and asparagine 171 each contribute to the FMN site. Asparagine 171 contributes to the substrate binding site. Residue serine 174 is the Nucleophile of the active site. Asparagine 176 provides a ligand contact to substrate. The FMN site is built by lysine 216 and threonine 244. 245-246 (NT) contributes to the substrate binding site. FMN is bound by residues glycine 267, glycine 296, and 317 to 318 (YS).

Belongs to the dihydroorotate dehydrogenase family. Type 2 subfamily. In terms of assembly, monomer. Requires FMN as cofactor.

Its subcellular location is the cell membrane. It carries out the reaction (S)-dihydroorotate + a quinone = orotate + a quinol. It functions in the pathway pyrimidine metabolism; UMP biosynthesis via de novo pathway; orotate from (S)-dihydroorotate (quinone route): step 1/1. Catalyzes the conversion of dihydroorotate to orotate with quinone as electron acceptor. The sequence is that of Dihydroorotate dehydrogenase (quinone) from Pseudomonas fluorescens (strain SBW25).